We begin with the raw amino-acid sequence, 311 residues long: Porphobilinogen deaminase (311 aa).

Position 243 is an S-(dipyrrolylmethanemethyl)cysteine (Cys243).

This sequence belongs to the HMBS family. In terms of assembly, monomer. Dipyrromethane is required as a cofactor.

The catalysed reaction is 4 porphobilinogen + H2O = hydroxymethylbilane + 4 NH4(+). The protein operates within porphyrin-containing compound metabolism; protoporphyrin-IX biosynthesis; coproporphyrinogen-III from 5-aminolevulinate: step 2/4. Functionally, tetrapolymerization of the monopyrrole PBG into the hydroxymethylbilane pre-uroporphyrinogen in several discrete steps. This Aliivibrio fischeri (strain ATCC 700601 / ES114) (Vibrio fischeri) protein is Porphobilinogen deaminase.